The primary structure comprises 470 residues: Cell division protein FtsP (470 aa).

The segment at residues 1 to 27 (MSLSRRQFIQASGIALCAGAVPLKASA) is a signal peptide (tat-type signal). Residues 68 to 164 (WGINGRYLGP…NGLAGMWLVE (97 aa)) form the Plastocyanin-like domain.

Belongs to the FtsP family. In terms of processing, exported by the Tat system. The position of the signal peptide cleavage has been experimentally proven. Can also be exported by the Sec system.

The protein localises to the periplasm. Cell division protein that is required for growth during stress conditions. May be involved in protecting or stabilizing the divisomal assembly under conditions of stress. This chain is Cell division protein FtsP, found in Escherichia coli (strain K12).